A 707-amino-acid chain; its full sequence is DNA topoisomerase 1 (707 aa).

Positions 1–140 (MYAILAEKPS…IKRLWTSSMT (140 aa)) constitute a Toprim domain. The region spanning 157 to 596 (TLPLYYQAKA…HSKKLSSVLF (440 aa)) is the Topo IA-type catalytic domain. Residues 199 to 204 (SLGRVQ) form an interaction with DNA region. Catalysis depends on Y323, which acts as the O-(5'-phospho-DNA)-tyrosine intermediate.

Belongs to the type IA topoisomerase family. Monomer.

The enzyme catalyses ATP-independent breakage of single-stranded DNA, followed by passage and rejoining.. Releases the supercoiling and torsional tension of DNA, which is introduced during the DNA replication and transcription, by transiently cleaving and rejoining one strand of the DNA duplex. Introduces a single-strand break via transesterification at a target site in duplex DNA. The scissile phosphodiester is attacked by the catalytic tyrosine of the enzyme, resulting in the formation of a DNA-(5'-phosphotyrosyl)-enzyme intermediate and the expulsion of a 3'-OH DNA strand. The free DNA strand then undergoes passage around the unbroken strand, thus removing DNA supercoils. Finally, in the religation step, the DNA 3'-OH attacks the covalent intermediate to expel the active-site tyrosine and restore the DNA phosphodiester backbone. The polypeptide is DNA topoisomerase 1 (topA) (Alkalihalophilus pseudofirmus (strain ATCC BAA-2126 / JCM 17055 / OF4) (Bacillus pseudofirmus)).